The sequence spans 65 residues: Antitoxin VapB32 (65 aa).

Residues 46-65 (ALGGTDPQATAAPRRRTSPR) are disordered.

Antitoxin component of a type II toxin-antitoxin (TA) system. The chain is Antitoxin VapB32 (vapB32) from Mycobacterium tuberculosis (strain CDC 1551 / Oshkosh).